The chain runs to 458 residues: ATP synthase subunit beta (458 aa).

148–155 contributes to the ATP binding site; it reads GGAGVGKT.

This sequence belongs to the ATPase alpha/beta chains family. F-type ATPases have 2 components, CF(1) - the catalytic core - and CF(0) - the membrane proton channel. CF(1) has five subunits: alpha(3), beta(3), gamma(1), delta(1), epsilon(1). CF(0) has three main subunits: a(1), b(2) and c(9-12). The alpha and beta chains form an alternating ring which encloses part of the gamma chain. CF(1) is attached to CF(0) by a central stalk formed by the gamma and epsilon chains, while a peripheral stalk is formed by the delta and b chains.

Its subcellular location is the cell inner membrane. The catalysed reaction is ATP + H2O + 4 H(+)(in) = ADP + phosphate + 5 H(+)(out). In terms of biological role, produces ATP from ADP in the presence of a proton gradient across the membrane. The catalytic sites are hosted primarily by the beta subunits. The protein is ATP synthase subunit beta of Pseudomonas fluorescens (strain SBW25).